The sequence spans 238 residues: Ribonuclease PH (238 aa).

Residues R86 and 124–126 (GTR) each bind phosphate.

It belongs to the RNase PH family. As to quaternary structure, homohexameric ring arranged as a trimer of dimers.

It carries out the reaction tRNA(n+1) + phosphate = tRNA(n) + a ribonucleoside 5'-diphosphate. Phosphorolytic 3'-5' exoribonuclease that plays an important role in tRNA 3'-end maturation. Removes nucleotide residues following the 3'-CCA terminus of tRNAs; can also add nucleotides to the ends of RNA molecules by using nucleoside diphosphates as substrates, but this may not be physiologically important. Probably plays a role in initiation of 16S rRNA degradation (leading to ribosome degradation) during starvation. This chain is Ribonuclease PH, found in Marinobacter nauticus (strain ATCC 700491 / DSM 11845 / VT8) (Marinobacter aquaeolei).